Consider the following 352-residue polypeptide: MTSSLLLAFLLLAPTTVATPRAGGQCPACGGPTLELESQRELLLDLAKRSILDKLHLTQRPTLNRPVSRAALRTALQHLHGVPQGALLEDNREQECEIISFAETGLSTINQTRLDFHFSSDRTAGDREVQQASLMFFVQLPSNTTWTLKVRVLVLGPHNTNLTLATQYLLEVDASGWHQLPLGPEAQAACSQGHLTLELVLEGQVAQSSVILGGAAHRPFVAARVRVGGKHQIHRRGIDCQGGSRMCCRQEFFVDFREIGWHDWIIQPEGYAMNFCIGQCPLHIAGMPGIAASFHTAVLNLLKANTAAGTTGGGSCCVPTARRPLSLLYYDRDSNIVKTDIPDMVVEACGCS.

A signal peptide spans Met1–Ala18. A propeptide spanning residues Thr19–Arg236 is cleaved from the precursor. Asn110, Asn143, and Asn161 each carry an N-linked (GlcNAc...) asparagine glycan. Cystine bridges form between Cys240/Cys248, Cys247/Cys317, Cys276/Cys349, and Cys280/Cys351.

It belongs to the TGF-beta family. In terms of assembly, homodimeric or heterodimeric through association with alpha and beta subunits, linked by one or more disulfide bonds. Inhibins are heterodimers of one alpha and one beta subunit. Activins are homo- or heterodimers of beta subunits only. As to expression, expressed in benign prostatic hyperplasia.

It is found in the secreted. Its function is as follows. Inhibins and activins inhibit and activate, respectively, the secretion of follitropin by the pituitary gland. Inhibins/activins are involved in regulating a number of diverse functions such as hypothalamic and pituitary hormone secretion, gonadal hormone secretion, germ cell development and maturation, erythroid differentiation, insulin secretion, nerve cell survival, embryonic axial development or bone growth, depending on their subunit composition. Inhibins appear to oppose the functions of activins. The sequence is that of Inhibin beta C chain (INHBC) from Homo sapiens (Human).